We begin with the raw amino-acid sequence, 88 residues long: MPNTKSAEKALRVADANRQENRRAKSQVKTSLTKVKKLVDAGSLTEAEAAAVSAQSTLDKAAEKGILHPKNAARRKSRLMKKLNQAAK.

The span at 1–23 (MPNTKSAEKALRVADANRQENRR) shows a compositional bias: basic and acidic residues. 2 disordered regions span residues 1 to 28 (MPNT…KSQV) and 69 to 88 (PKNA…QAAK). The span at 71–81 (NAARRKSRLMK) shows a compositional bias: basic residues.

The protein belongs to the bacterial ribosomal protein bS20 family.

In terms of biological role, binds directly to 16S ribosomal RNA. This is Small ribosomal subunit protein bS20 from Dehalococcoides mccartyi (strain ATCC BAA-2266 / KCTC 15142 / 195) (Dehalococcoides ethenogenes (strain 195)).